Consider the following 178-residue polypeptide: Large ribosomal subunit protein uL6 (178 aa).

Belongs to the universal ribosomal protein uL6 family. As to quaternary structure, part of the 50S ribosomal subunit.

Functionally, this protein binds to the 23S rRNA, and is important in its secondary structure. It is located near the subunit interface in the base of the L7/L12 stalk, and near the tRNA binding site of the peptidyltransferase center. The polypeptide is Large ribosomal subunit protein uL6 (Frankia alni (strain DSM 45986 / CECT 9034 / ACN14a)).